The primary structure comprises 269 residues: Intron-associated endonuclease 3 (269 aa).

In terms of biological role, this endonuclease is specific to the nrdB gene splice junction and is involved in intron homing. In Enterobacteria phage RB3 (Bacteriophage RB3), this protein is Intron-associated endonuclease 3 (ITEVIIIR).